The following is a 521-amino-acid chain: Methionine--tRNA ligase (521 aa).

Residues 14 to 24 (YYSSGNPHIGH) carry the 'HIGH' region motif. Zn(2+) contacts are provided by C129, C132, C151, and H155. A 'KMSKS' region motif is present at residues 306-310 (KMSKS). An ATP-binding site is contributed by K309.

It belongs to the class-I aminoacyl-tRNA synthetase family. MetG type 2A subfamily. In terms of assembly, monomer. Zn(2+) is required as a cofactor.

The protein resides in the cytoplasm. The enzyme catalyses tRNA(Met) + L-methionine + ATP = L-methionyl-tRNA(Met) + AMP + diphosphate. Is required not only for elongation of protein synthesis but also for the initiation of all mRNA translation through initiator tRNA(fMet) aminoacylation. This chain is Methionine--tRNA ligase, found in Ureaplasma parvum serovar 3 (strain ATCC 700970).